Reading from the N-terminus, the 611-residue chain is Chaperone protein DnaK (611 aa).

Threonine 173 bears the Phosphothreonine; by autocatalysis mark. Low complexity predominate over residues 577–591; sequence AAAAQAAQGGEADAG. Residues 577–611 are disordered; it reads AAAAQAAQGGEADAGAGKKDDGVVDADFEEVKDDK. Residues 599 to 611 are compositionally biased toward acidic residues; the sequence is VVDADFEEVKDDK.

Belongs to the heat shock protein 70 family.

Acts as a chaperone. This Lysinibacillus sphaericus (strain C3-41) protein is Chaperone protein DnaK.